The primary structure comprises 315 residues: Probable HTH-type transcriptional regulator SinR (315 aa).

The HTH lysR-type domain maps to 8–65 (RGMRDWMIFIKVAEVGNLSRAARELDISISAVSKSLSRLENSIEVTLLRRDSHHLELT). Positions 25–44 (LSRAARELDISISAVSKSLS) form a DNA-binding region, H-T-H motif.

The protein belongs to the LysR transcriptional regulatory family.

Functionally, probable regulatory protein. Its target is not known. This is Probable HTH-type transcriptional regulator SinR (sinR) from Salmonella typhimurium (strain LT2 / SGSC1412 / ATCC 700720).